We begin with the raw amino-acid sequence, 660 residues long: Acetyl-coenzyme A synthetase (660 aa).

Residues 197–200 and threonine 317 each bind CoA; that span reads RGGK. Residues 397–399, 421–426, aspartate 512, and arginine 528 contribute to the ATP site; these read GEP and DTWWQT. Serine 536 contacts CoA. Residue arginine 539 coordinates ATP. The Mg(2+) site is built by valine 550, histidine 552, and valine 555. Lysine 625 carries the N6-acetyllysine modification.

It belongs to the ATP-dependent AMP-binding enzyme family. It depends on Mg(2+) as a cofactor. Post-translationally, acetylated. Deacetylation by the SIR2-homolog deacetylase activates the enzyme.

It carries out the reaction acetate + ATP + CoA = acetyl-CoA + AMP + diphosphate. Its function is as follows. Catalyzes the conversion of acetate into acetyl-CoA (AcCoA), an essential intermediate at the junction of anabolic and catabolic pathways. AcsA undergoes a two-step reaction. In the first half reaction, AcsA combines acetate with ATP to form acetyl-adenylate (AcAMP) intermediate. In the second half reaction, it can then transfer the acetyl group from AcAMP to the sulfhydryl group of CoA, forming the product AcCoA. This Burkholderia lata (strain ATCC 17760 / DSM 23089 / LMG 22485 / NCIMB 9086 / R18194 / 383) protein is Acetyl-coenzyme A synthetase.